We begin with the raw amino-acid sequence, 98 residues long: Cystatin-A (98 aa).

The residue at position 1 (methionine 1) is an N-acetylmethionine. A Secondary area of contact motif is present at residues 46–50; sequence QVVAG.

The protein belongs to the cystatin family. Expressed in the skin throughout the epidermis.

The protein resides in the cytoplasm. Its function is as follows. This is an intracellular thiol proteinase inhibitor. Has an important role in desmosome-mediated cell-cell adhesion in the lower levels of the epidermis. The polypeptide is Cystatin-A (CSTA) (Homo sapiens (Human)).